Consider the following 129-residue polypeptide: RxLR effector protein SFI6 (129 aa).

The first 16 residues, 1–16 (MTLVVLATGLLASGTA), serve as a signal peptide directing secretion. A RxLR-dEER motif is present at residues 42–64 (RFLRSHQITDDKVEINEHGEEER).

The protein belongs to the RxLR effector family.

Its subcellular location is the secreted. It localises to the host cytoplasm. The protein localises to the host cell membrane. Functionally, effector that suppresses flg22-induced post-translational MAP kinase activation in tomato but not in Arabidopsis. The perception of highly conserved pathogen- or microbe-associated molecular patterns (PAMPs/MAMPs), such as flg22, triggers converging signaling pathways recruiting MAP kinase cascades and inducing transcriptional re-programming, yielding a generic antimicrobial response. This Phytophthora infestans (strain T30-4) (Potato late blight agent) protein is RxLR effector protein SFI6.